We begin with the raw amino-acid sequence, 299 residues long: Glycine--tRNA ligase alpha subunit (299 aa).

Belongs to the class-II aminoacyl-tRNA synthetase family. Tetramer of two alpha and two beta subunits.

It is found in the cytoplasm. It catalyses the reaction tRNA(Gly) + glycine + ATP = glycyl-tRNA(Gly) + AMP + diphosphate. The chain is Glycine--tRNA ligase alpha subunit from Caulobacter vibrioides (strain ATCC 19089 / CIP 103742 / CB 15) (Caulobacter crescentus).